The primary structure comprises 250 residues: tRNA (guanine-N(1)-)-methyltransferase (250 aa).

Residues Gly-115 and 135–140 (LGDFVL) each bind S-adenosyl-L-methionine.

This sequence belongs to the RNA methyltransferase TrmD family. Homodimer.

It is found in the cytoplasm. The enzyme catalyses guanosine(37) in tRNA + S-adenosyl-L-methionine = N(1)-methylguanosine(37) in tRNA + S-adenosyl-L-homocysteine + H(+). Functionally, specifically methylates guanosine-37 in various tRNAs. The sequence is that of tRNA (guanine-N(1)-)-methyltransferase from Legionella pneumophila (strain Lens).